A 533-amino-acid polypeptide reads, in one-letter code: Thromboxane-A synthase (533 aa).

The Cytoplasmic portion of the chain corresponds to 1–10; that stretch reads MEVLGLLKFE. A helical membrane pass occupies residues 11 to 31; that stretch reads VSGTIVTVTLLVALLALLKWY. Over 32-75 the chain is Lumenal; it reads SMSAFSRLEKLGIRHPKPSPFVGNLMFFRQGFWESQLELRERYG. Residues 76 to 96 form a helical membrane-spanning segment; it reads PLCGYYLGRRMHVVISEPDMI. Residues 97–223 lie on the Cytoplasmic side of the membrane; that stretch reads KQVLVENFSN…RRASTFCIPR (127 aa). A helical membrane pass occupies residues 224-244; it reads PLLVLILSFPSIMVPLARILP. Residues 245 to 335 lie on the Lumenal side of the membrane; sequence NKNRDELNGF…FTVDEIVGQA (91 aa). Residues 336–356 form a helical membrane-spanning segment; sequence FLFLIAGHEVITNTLSFITYL. Residues 357-533 are Cytoplasmic-facing; that stretch reads LATHPDCQER…NGVYIKIVSR (177 aa). Heme is bound at residue cysteine 479.

The protein belongs to the cytochrome P450 family. In terms of assembly, monomer. Heme is required as a cofactor. As to expression, expressed primarily in lung, kidney, and spleen.

Its subcellular location is the endoplasmic reticulum membrane. It carries out the reaction prostaglandin H2 = thromboxane A2. The catalysed reaction is prostaglandin H2 = (12S)-hydroxy-(5Z,8E,10E)-heptadecatrienoate + malonaldehyde. The enzyme catalyses a hydroperoxyeicosatetraenoate = an oxoeicosatetraenoate + H2O. It catalyses the reaction (15S)-hydroperoxy-(5Z,8Z,11Z,13E)-eicosatetraenoate = 15-oxo-(5Z,8Z,11Z,13E)-eicosatetraenoate + H2O. It carries out the reaction (15S)-hydroperoxy-(5Z,8Z,11Z,13E)-eicosatetraenoate + AH2 = (15S)-hydroxy-(5Z,8Z,11Z,13E)-eicosatetraenoate + A + H2O. Functionally, catalyzes the conversion of prostaglandin H2 (PGH2) to thromboxane A2 (TXA2), a potent inducer of blood vessel constriction and platelet aggregation. Also cleaves PGH2 to 12-hydroxy-heptadecatrienoicacid (12-HHT) and malondialdehyde, which is known to act as a mediator of DNA damage. 12-HHT and malondialdehyde are formed stoichiometrically in the same amounts as TXA2. Additionally, displays dehydratase activity, toward (15S)-hydroperoxy-(5Z,8Z,11Z,13E)-eicosatetraenoate (15(S)-HPETE) producing 15-KETE and 15-HETE. The chain is Thromboxane-A synthase (Tbxas1) from Mus musculus (Mouse).